The chain runs to 476 residues: Adenosylhomocysteinase (476 aa).

Substrate-binding residues include threonine 67, aspartate 142, and glutamate 202. 203–205 (TTT) contacts NAD(+). The substrate site is built by lysine 232 and aspartate 236. Residues asparagine 237, 266–271 (GYGDVG), glutamate 289, asparagine 324, 345–347 (IGH), and asparagine 390 contribute to the NAD(+) site.

This sequence belongs to the adenosylhomocysteinase family. NAD(+) is required as a cofactor.

Its subcellular location is the cytoplasm. It catalyses the reaction S-adenosyl-L-homocysteine + H2O = L-homocysteine + adenosine. The protein operates within amino-acid biosynthesis; L-homocysteine biosynthesis; L-homocysteine from S-adenosyl-L-homocysteine: step 1/1. May play a key role in the regulation of the intracellular concentration of adenosylhomocysteine. This chain is Adenosylhomocysteinase, found in Synechococcus sp. (strain CC9311).